The chain runs to 222 residues: uncharacterized protein (222 aa).

This is an uncharacterized protein from Archaeoglobus fulgidus (strain ATCC 49558 / DSM 4304 / JCM 9628 / NBRC 100126 / VC-16).